The primary structure comprises 1433 residues: DNA-directed RNA polymerase subunit beta' (1433 aa).

4 residues coordinate Zn(2+): C66, C68, C81, and C84. Residues D473, D475, and D477 each contribute to the Mg(2+) site. Zn(2+) is bound by residues C815, C889, C896, and C899.

It belongs to the RNA polymerase beta' chain family. In terms of assembly, the RNAP catalytic core consists of 2 alpha, 1 beta, 1 beta' and 1 omega subunit. When a sigma factor is associated with the core the holoenzyme is formed, which can initiate transcription. Mg(2+) serves as cofactor. It depends on Zn(2+) as a cofactor.

The enzyme catalyses RNA(n) + a ribonucleoside 5'-triphosphate = RNA(n+1) + diphosphate. DNA-dependent RNA polymerase catalyzes the transcription of DNA into RNA using the four ribonucleoside triphosphates as substrates. The polypeptide is DNA-directed RNA polymerase subunit beta' (Porphyromonas gingivalis (strain ATCC BAA-308 / W83)).